Consider the following 142-residue polypeptide: Large ribosomal subunit protein uL13 (142 aa).

The protein belongs to the universal ribosomal protein uL13 family. As to quaternary structure, part of the 50S ribosomal subunit.

In terms of biological role, this protein is one of the early assembly proteins of the 50S ribosomal subunit, although it is not seen to bind rRNA by itself. It is important during the early stages of 50S assembly. In Thermococcus kodakarensis (strain ATCC BAA-918 / JCM 12380 / KOD1) (Pyrococcus kodakaraensis (strain KOD1)), this protein is Large ribosomal subunit protein uL13.